A 126-amino-acid polypeptide reads, in one-letter code: uncharacterized protein (126 aa).

Residues 4–126 enclose the VOC domain; the sequence is RIDHTGIMVR…DGEWIEFFQR (123 aa). A divalent metal cation-binding residues include histidine 7, glutamate 42, histidine 74, and glutamate 122.

The protein belongs to the glyoxalase I family.

This is an uncharacterized protein from Bacillus subtilis (strain 168).